Here is a 238-residue protein sequence, read N- to C-terminus: Small proline-rich protein 3 (238 aa).

The segment at 1–67 (MSSYQQKQPF…CSTKVPEPGN (67 aa)) is disordered. Residue Ser-2 is modified to N-acetylserine. A run of 21 repeats spans residues 52–59 (TKIPEPCS), 60–67 (TKVPEPGN), 68–75 (TVVLEPDY), 76–83 (TTMPGPCS), 84–91 (TNITEPDY), 92–99 (TTIPGPCS), 100–107 (TNITEPDY), 108–115 (TTIPGPCS), 116–123 (TNIPGPDR), 124–131 (TVVPGSCS), 132–139 (TNITEPDY), 140–147 (TTIPGPSS), 148–155 (TKIPDPGC), 156–163 (AMVPGPSP), 164–175 (SSTSEPSSEPCS), 176–183 (INVREPGY), 184–191 (MNASEPTH), 192–199 (AKVPDQGY), 200–207 (TKIPDQGS), 208–215 (SKVPEPCQ), and 216–223 (SRVPEVCP). The 21 X 8 AA approximate tandem repeats stretch occupies residues 52-223 (TKIPEPCSTK…CQSRVPEVCP (172 aa)). The segment at 110–238 (IPGPCSTNIP…VSAKQKTKQK (129 aa)) is disordered. Low complexity predominate over residues 163-175 (PSSTSEPSSEPCS).

It belongs to the cornifin (SPRR) family.

The protein resides in the cytoplasm. Functionally, cross-linked envelope protein of keratinocytes. The chain is Small proline-rich protein 3 (Sprr3) from Mus musculus (Mouse).